Reading from the N-terminus, the 200-residue chain is NADH-quinone oxidoreductase subunit B (200 aa).

[4Fe-4S] cluster-binding residues include Cys78, Cys79, Cys144, and Cys174.

It belongs to the complex I 20 kDa subunit family. In terms of assembly, NDH-1 is composed of 14 different subunits. Subunits NuoB, C, D, E, F, and G constitute the peripheral sector of the complex. Requires [4Fe-4S] cluster as cofactor.

It is found in the cell membrane. It catalyses the reaction a quinone + NADH + 5 H(+)(in) = a quinol + NAD(+) + 4 H(+)(out). Functionally, NDH-1 shuttles electrons from NADH, via FMN and iron-sulfur (Fe-S) centers, to quinones in the respiratory chain. The immediate electron acceptor for the enzyme in this species is believed to be ubiquinone. Couples the redox reaction to proton translocation (for every two electrons transferred, four hydrogen ions are translocated across the cytoplasmic membrane), and thus conserves the redox energy in a proton gradient. The sequence is that of NADH-quinone oxidoreductase subunit B from Dehalococcoides mccartyi (strain CBDB1).